The primary structure comprises 295 residues: Iron-sulfur cluster carrier protein (295 aa).

Position 38-45 (38-45) interacts with ATP; that stretch reads GKGGVGKS.

Belongs to the Mrp/NBP35 ATP-binding proteins family. In terms of assembly, homodimer.

In terms of biological role, binds and transfers iron-sulfur (Fe-S) clusters to target apoproteins. Can hydrolyze ATP. This chain is Iron-sulfur cluster carrier protein, found in Pyrococcus furiosus (strain ATCC 43587 / DSM 3638 / JCM 8422 / Vc1).